A 78-amino-acid chain; its full sequence is MAKVCVVTGKRPISGNNVSHANNRTRRRFYPNLHTHRFWVENENRFVKLKLSAKGLRIIDKKGIDTVLAKIRIRGEKV.

The protein belongs to the bacterial ribosomal protein bL28 family.

This Ruthia magnifica subsp. Calyptogena magnifica protein is Large ribosomal subunit protein bL28.